The sequence spans 728 residues: Lanosterol synthase (728 aa).

The stretch at Arg117–Gly159 is one PFTB 1 repeat. Asp450 serves as the catalytic Proton donor. PFTB repeat units follow at residues Ile561–Gly602 and Val611–Gly657.

This sequence belongs to the terpene cyclase/mutase family.

It is found in the lipid droplet. Its subcellular location is the endoplasmic reticulum membrane. The enzyme catalyses (S)-2,3-epoxysqualene = lanosterol. The protein operates within terpene metabolism; lanosterol biosynthesis; lanosterol from farnesyl diphosphate: step 3/3. Lanosterol synthase; part of the third module of ergosterol biosynthesis pathway that includes the late steps of the pathway. ERG7 catalyzes the cyclization of (S)-2,3 oxidosqualene to lanosterol, a reaction that forms the sterol core. The third module or late pathway involves the ergosterol synthesis itself through consecutive reactions that mainly occur in the endoplasmic reticulum (ER) membrane. Firstly, the squalene synthase ERG9 catalyzes the condensation of 2 farnesyl pyrophosphate moieties to form squalene, which is the precursor of all steroids. Squalene synthase is crucial for balancing the incorporation of farnesyl diphosphate (FPP) into sterol and nonsterol isoprene synthesis. Secondly, the squalene epoxidase ERG1 catalyzes the stereospecific oxidation of squalene to (S)-2,3-epoxysqualene, which is considered to be a rate-limiting enzyme in steroid biosynthesis. Then, the lanosterol synthase ERG7 catalyzes the cyclization of (S)-2,3 oxidosqualene to lanosterol, a reaction that forms the sterol core. In the next steps, lanosterol is transformed to zymosterol through a complex process involving various demethylation, reduction and desaturation reactions. The lanosterol 14-alpha-demethylase ERG11 (also known as CYP51) catalyzes C14-demethylation of lanosterol to produce 4,4'-dimethyl cholesta-8,14,24-triene-3-beta-ol, which is critical for ergosterol biosynthesis. The C-14 reductase ERG24 reduces the C14=C15 double bond of 4,4-dimethyl-cholesta-8,14,24-trienol to produce 4,4-dimethyl-cholesta-8,24-dienol. 4,4-dimethyl-cholesta-8,24-dienol is substrate of the C-4 demethylation complex ERG25-ERG26-ERG27 in which ERG25 catalyzes the three-step monooxygenation required for the demethylation of 4,4-dimethyl and 4alpha-methylsterols, ERG26 catalyzes the oxidative decarboxylation that results in a reduction of the 3-beta-hydroxy group at the C-3 carbon to an oxo group, and ERG27 is responsible for the reduction of the keto group on the C-3. ERG28 has a role as a scaffold to help anchor ERG25, ERG26 and ERG27 to the endoplasmic reticulum and ERG29 regulates the activity of the iron-containing C4-methylsterol oxidase ERG25. Then, the sterol 24-C-methyltransferase ERG6 catalyzes the methyl transfer from S-adenosyl-methionine to the C-24 of zymosterol to form fecosterol. The C-8 sterol isomerase ERG2 catalyzes the reaction which results in unsaturation at C-7 in the B ring of sterols and thus converts fecosterol to episterol. The sterol-C5-desaturase ERG3 then catalyzes the introduction of a C-5 double bond in the B ring to produce 5-dehydroepisterol. The C-22 sterol desaturase ERG5 further converts 5-dehydroepisterol into ergosta-5,7,22,24(28)-tetraen-3beta-ol by forming the C-22(23) double bond in the sterol side chain. Finally, ergosta-5,7,22,24(28)-tetraen-3beta-ol is substrate of the C-24(28) sterol reductase ERG4 to produce ergosterol. This Candida albicans (strain SC5314 / ATCC MYA-2876) (Yeast) protein is Lanosterol synthase.